The following is a 500-amino-acid chain: Plasma protease C1 inhibitor (500 aa).

Positions 1–22 (MASRLTLLTLLLLLLAGDRASS) are cleaved as a signal peptide. Residues 20 to 31 (ASSNPNATSSSS) show a composition bias toward low complexity. A disordered region spans residues 20–43 (ASSNPNATSSSSQDPESLQDRGEG). Asparagine 25 carries an N-linked (GlcNAc...) (complex) asparagine glycan. Residues threonine 47 and threonine 48 are each glycosylated (O-linked (GalNAc...) threonine). O-linked (GalNAc...) serine glycosylation is present at serine 64. The tract at residues 65–118 (LPTTNSTTNSATKITANTTDEPTTQPTTEPTTQPTIQPTQPTTQLPTDSPTQPT) is disordered. Positions 67–118 (TTNSTTNSATKITANTTDEPTTQPTTEPTTQPTIQPTQPTTQLPTDSPTQPT) are enriched in low complexity. An N-linked (GlcNAc...) asparagine glycan is attached at asparagine 69. Threonine 71 carries O-linked (GalNAc...) threonine glycosylation. Residue asparagine 81 is glycosylated (N-linked (GlcNAc...) asparagine). Threonine 83, threonine 88, threonine 92, and threonine 96 each carry an O-linked (GalNAc...) threonine glycan. Tandem repeats lie at residues 85 to 88 (EPTT), 89 to 92 (QPTT), 93 to 96 (EPTT), 97 to 100 (QPTI), 101 to 104 (QPTQ), 105 to 108 (PTTQ), and 116 to 119 (QPTT). Residues 85–119 (EPTTQPTTEPTTQPTIQPTQPTTQLPTDSPTQPTT) are 7 X 4 AA tandem repeats of [QE]-P-T-[TQ]. 2 disulfide bridges follow: cysteine 123-cysteine 428 and cysteine 130-cysteine 205. 2 N-linked (GlcNAc...) (complex) asparagine glycosylation sites follow: asparagine 238 and asparagine 253. N-linked (GlcNAc...) asparagine; in variant TA glycosylation is present at asparagine 272. A glycan (N-linked (GlcNAc...) (complex) asparagine) is linked at asparagine 352.

Belongs to the serpin family. In terms of assembly, interacts with MASP1. As to quaternary structure, (Microbial infection) Binds to E.coli stcE which allows localization of SERPING1 to cell membranes thus protecting the bacteria against complement-mediated lysis. Post-translationally, highly glycosylated (49%) with N- and O-glycosylation. O-glycosylated with core 1 or possibly core 8 glycans. N-glycan heterogeneity at Asn-25: Hex5HexNAc4 (minor), dHex1Hex5HexNAc4 (minor), Hex6HexNAc5 (major) and dHex1Hex6HexNAc5 (minor). Cleaved by C1S in vitro. In terms of processing, (Microbial infection) Can be proteolytically cleaved by E.coli stcE.

It is found in the secreted. Serine protease inhibitor, which acrs as a regulator of the classical complement pathway. Forms a proteolytically inactive stoichiometric complex with the C1r or C1s proteases. May also regulate blood coagulation, fibrinolysis and the generation of kinins. Very efficient inhibitor of FXIIa. Inhibits chymotrypsin and kallikrein. This Homo sapiens (Human) protein is Plasma protease C1 inhibitor (SERPING1).